Reading from the N-terminus, the 449-residue chain is 8-oxoguanine deaminase (449 aa).

Residues His64 and His66 each coordinate Zn(2+). Gln69 serves as a coordination point for substrate. A Zn(2+)-binding site is contributed by His232. Positions 235 and 269 each coordinate substrate. Positions 269 and 320 each coordinate Zn(2+).

It belongs to the metallo-dependent hydrolases superfamily. ATZ/TRZ family. As to quaternary structure, homodimer. Zn(2+) is required as a cofactor.

It carries out the reaction 8-oxoguanine + H2O + H(+) = urate + NH4(+). It functions in the pathway purine metabolism. Its function is as follows. Specifically deaminates 8-Oxoguanine (8-oxoG) to uric acid. 8-oxoG is formed via the oxidation of guanine within DNA by reactive oxygen species and leads, if uncorrected, to the incorporation of 8-oxoG:A mismatches and eventually to G:C to T:A transversions. This chain is 8-oxoguanine deaminase, found in Pseudomonas aeruginosa (strain ATCC 15692 / DSM 22644 / CIP 104116 / JCM 14847 / LMG 12228 / 1C / PRS 101 / PAO1).